The primary structure comprises 246 residues: 1-(5-phosphoribosyl)-5-[(5-phosphoribosylamino)methylideneamino] imidazole-4-carboxamide isomerase (246 aa).

Asp7 acts as the Proton acceptor in catalysis. Asp130 (proton donor) is an active-site residue.

It belongs to the HisA/HisF family.

The protein resides in the cytoplasm. The enzyme catalyses 1-(5-phospho-beta-D-ribosyl)-5-[(5-phospho-beta-D-ribosylamino)methylideneamino]imidazole-4-carboxamide = 5-[(5-phospho-1-deoxy-D-ribulos-1-ylimino)methylamino]-1-(5-phospho-beta-D-ribosyl)imidazole-4-carboxamide. Its pathway is amino-acid biosynthesis; L-histidine biosynthesis; L-histidine from 5-phospho-alpha-D-ribose 1-diphosphate: step 4/9. The sequence is that of 1-(5-phosphoribosyl)-5-[(5-phosphoribosylamino)methylideneamino] imidazole-4-carboxamide isomerase from Blochmanniella pennsylvanica (strain BPEN).